Here is a 227-residue protein sequence, read N- to C-terminus: Cytochrome c oxidase subunit 2 (227 aa).

At 1–14 (MAYPFQLGLQDATS) the chain is on the mitochondrial intermembrane side. The helical transmembrane segment at 15-45 (PIMEELMNFHDHTLMIVFLISSLVLYIISLM) threads the bilayer. The Mitochondrial matrix segment spans residues 46–59 (LTTKLTHTSTMDAQ). A helical transmembrane segment spans residues 60-87 (EVETIWTILPAVILILIALPSLRILYMM). The Mitochondrial intermembrane portion of the chain corresponds to 88-227 (DEINNPVLTV…NFENWSASMI (140 aa)). 6 residues coordinate Cu cation: histidine 161, cysteine 196, glutamate 198, cysteine 200, histidine 204, and methionine 207. Glutamate 198 provides a ligand contact to Mg(2+).

Belongs to the cytochrome c oxidase subunit 2 family. Component of the cytochrome c oxidase (complex IV, CIV), a multisubunit enzyme composed of 14 subunits. The complex is composed of a catalytic core of 3 subunits MT-CO1, MT-CO2 and MT-CO3, encoded in the mitochondrial DNA, and 11 supernumerary subunits COX4I, COX5A, COX5B, COX6A, COX6B, COX6C, COX7A, COX7B, COX7C, COX8 and NDUFA4, which are encoded in the nuclear genome. The complex exists as a monomer or a dimer and forms supercomplexes (SCs) in the inner mitochondrial membrane with NADH-ubiquinone oxidoreductase (complex I, CI) and ubiquinol-cytochrome c oxidoreductase (cytochrome b-c1 complex, complex III, CIII), resulting in different assemblies (supercomplex SCI(1)III(2)IV(1) and megacomplex MCI(2)III(2)IV(2)). Found in a complex with TMEM177, COA6, COX18, COX20, SCO1 and SCO2. Interacts with TMEM177 in a COX20-dependent manner. Interacts with COX20. Interacts with COX16. Cu cation is required as a cofactor.

It is found in the mitochondrion inner membrane. It catalyses the reaction 4 Fe(II)-[cytochrome c] + O2 + 8 H(+)(in) = 4 Fe(III)-[cytochrome c] + 2 H2O + 4 H(+)(out). Functionally, component of the cytochrome c oxidase, the last enzyme in the mitochondrial electron transport chain which drives oxidative phosphorylation. The respiratory chain contains 3 multisubunit complexes succinate dehydrogenase (complex II, CII), ubiquinol-cytochrome c oxidoreductase (cytochrome b-c1 complex, complex III, CIII) and cytochrome c oxidase (complex IV, CIV), that cooperate to transfer electrons derived from NADH and succinate to molecular oxygen, creating an electrochemical gradient over the inner membrane that drives transmembrane transport and the ATP synthase. Cytochrome c oxidase is the component of the respiratory chain that catalyzes the reduction of oxygen to water. Electrons originating from reduced cytochrome c in the intermembrane space (IMS) are transferred via the dinuclear copper A center (CU(A)) of subunit 2 and heme A of subunit 1 to the active site in subunit 1, a binuclear center (BNC) formed by heme A3 and copper B (CU(B)). The BNC reduces molecular oxygen to 2 water molecules using 4 electrons from cytochrome c in the IMS and 4 protons from the mitochondrial matrix. The sequence is that of Cytochrome c oxidase subunit 2 (MT-CO2) from Maxomys bartelsii (Bartels's Javan maxomys).